A 605-amino-acid chain; its full sequence is Elongation factor 4 (605 aa).

The 183-residue stretch at 11–193 (KRIRNFSIIA…QIVTRISPPQ (183 aa)) folds into the tr-type G domain. GTP contacts are provided by residues 23–28 (DHGKST) and 140–143 (NKVD).

Belongs to the TRAFAC class translation factor GTPase superfamily. Classic translation factor GTPase family. LepA subfamily.

The protein localises to the cell membrane. The enzyme catalyses GTP + H2O = GDP + phosphate + H(+). Functionally, required for accurate and efficient protein synthesis under certain stress conditions. May act as a fidelity factor of the translation reaction, by catalyzing a one-codon backward translocation of tRNAs on improperly translocated ribosomes. Back-translocation proceeds from a post-translocation (POST) complex to a pre-translocation (PRE) complex, thus giving elongation factor G a second chance to translocate the tRNAs correctly. Binds to ribosomes in a GTP-dependent manner. In Onion yellows phytoplasma (strain OY-M), this protein is Elongation factor 4.